The sequence spans 60 residues: MGNPARKTFRAKRDSRRAQTFKASLPGIVECPQCHEMKMAHRVCKNCGHYKGKEVVSVEE.

The protein belongs to the bacterial ribosomal protein bL32 family.

This Clostridium perfringens (strain ATCC 13124 / DSM 756 / JCM 1290 / NCIMB 6125 / NCTC 8237 / Type A) protein is Large ribosomal subunit protein bL32.